Consider the following 269-residue polypeptide: MAEVPELASEMMAYYSGNEDDLFFEADGPKQMKCSFQDLDLCPLDGGIQLRISDHHYSKGFRQAASVVVAMDKLRKMLVPCPQTFQENDLSTFFPFIFEEEPIFFDTWDNEAYVHDAPVRSLNCTLRDSQQKSLVMSGPYELKALHLQGQDMEQQVVFSMSFVQGEESNDKIPVALGLKEKNLYLSCVLKDDKPTLQLESVDPKNYPKKKMEKRFVFNKIEINNKLEFESAQFPNWYISTSQAENMPVFLGGTKGGQDITDFTMQFVSS.

A propeptide spans 1–116 (MAEVPELASE…TWDNEAYVHD (116 aa)) (removed in mature form; by CASP1). Positions 228 to 241 (FESAQFPNWYISTS) match the Involved in interaction with TMED10 C-terminus motif.

Belongs to the IL-1 family. Monomer. In its precursor form, weakly interacts with full-length MEFV; the mature cytokine does not interact at all. Interacts with integrins ITGAV:ITGBV and ITGA5:ITGB1; integrin-binding is required for IL1B signaling. Interacts with cargo receptor TMED10; the interaction is direct and is required for the secretion of IL1B mature form. Interacts with HSP90AB1; the interaction facilitates cargo translocation into the ERGIC. Interacts with HSP90B1; the interaction facilitates cargo translocation into the ERGIC. Activation of the IL1B precursor involves a CASP1-catalyzed proteolytic cleavage. Processing and secretion are temporarily associated. Post-translationally, (Microbial infection) Cleavage by S.pyogenes cysteine protease SpeB promotes its activation independently of CASP1. Expressed in activated monocytes/macrophages (at protein level).

Its subcellular location is the cytoplasm. The protein resides in the cytosol. It is found in the secreted. The protein localises to the lysosome. It localises to the extracellular exosome. Its activity is regulated as follows. (Microbial infection) Cleavage by S.pyogenes cysteine protease SpeB promotes its activation independently of CASP1. SpeB-mediated maturation of IL1B plays a dual role depending on infection site: while IL1B inflammatory response prevents bacterial growth during invasive skin infections, it promotes streptococcal infection of the nasopharynx by disrupting colonization resistance mediated by the microbiota. Its function is as follows. Potent pro-inflammatory cytokine. Initially discovered as the major endogenous pyrogen, induces prostaglandin synthesis, neutrophil influx and activation, T-cell activation and cytokine production, B-cell activation and antibody production, and fibroblast proliferation and collagen production. Promotes Th17 differentiation of T-cells. Synergizes with IL12/interleukin-12 to induce IFNG synthesis from T-helper 1 (Th1) cells. Plays a role in angiogenesis by inducing VEGF production synergistically with TNF and IL6. Involved in transduction of inflammation downstream of pyroptosis: its mature form is specifically released in the extracellular milieu by passing through the gasdermin-D (GSDMD) pore. Acts as a sensor of S.pyogenes infection in skin: cleaved and activated by pyogenes SpeB protease, leading to an inflammatory response that prevents bacterial growth during invasive skin infection. The sequence is that of Interleukin-1 beta from Homo sapiens (Human).